A 1396-amino-acid polypeptide reads, in one-letter code: DNA-directed RNA polymerase subunit beta' (1396 aa).

Cys-72, Cys-74, Cys-87, and Cys-90 together coordinate Zn(2+). 3 residues coordinate Mg(2+): Asp-463, Asp-465, and Asp-467. The Zn(2+) site is built by Cys-814, Cys-889, Cys-896, and Cys-899.

Belongs to the RNA polymerase beta' chain family. The RNAP catalytic core consists of 2 alpha, 1 beta, 1 beta' and 1 omega subunit. When a sigma factor is associated with the core the holoenzyme is formed, which can initiate transcription. It depends on Mg(2+) as a cofactor. The cofactor is Zn(2+).

The catalysed reaction is RNA(n) + a ribonucleoside 5'-triphosphate = RNA(n+1) + diphosphate. DNA-dependent RNA polymerase catalyzes the transcription of DNA into RNA using the four ribonucleoside triphosphates as substrates. The sequence is that of DNA-directed RNA polymerase subunit beta' from Chlamydia trachomatis serovar L2b (strain UCH-1/proctitis).